The sequence spans 89 residues: Small ribosomal subunit protein uS15 (89 aa).

Belongs to the universal ribosomal protein uS15 family. Part of the 30S ribosomal subunit. Forms a bridge to the 50S subunit in the 70S ribosome, contacting the 23S rRNA.

Functionally, one of the primary rRNA binding proteins, it binds directly to 16S rRNA where it helps nucleate assembly of the platform of the 30S subunit by binding and bridging several RNA helices of the 16S rRNA. Its function is as follows. Forms an intersubunit bridge (bridge B4) with the 23S rRNA of the 50S subunit in the ribosome. In Frankia casuarinae (strain DSM 45818 / CECT 9043 / HFP020203 / CcI3), this protein is Small ribosomal subunit protein uS15.